Consider the following 223-residue polypeptide: Small ribosomal subunit protein uS3 (223 aa).

The region spanning 39–117 (IREFLRKKPS…RPELNAKLVA (79 aa)) is the KH type-2 domain.

Belongs to the universal ribosomal protein uS3 family. Part of the 30S ribosomal subunit. Forms a tight complex with proteins S10 and S14.

Its function is as follows. Binds the lower part of the 30S subunit head. Binds mRNA in the 70S ribosome, positioning it for translation. The polypeptide is Small ribosomal subunit protein uS3 (Chlamydia abortus (strain DSM 27085 / S26/3) (Chlamydophila abortus)).